Reading from the N-terminus, the 144-residue chain is Bacilliredoxin SH1478 (144 aa).

Belongs to the bacilliredoxin family.

The protein is Bacilliredoxin SH1478 of Staphylococcus haemolyticus (strain JCSC1435).